Consider the following 228-residue polypeptide: Cell surface Cu-only superoxide dismutase 5 (228 aa).

A signal peptide spans 1-15; that stretch reads MKYLSIFLLATFALA. N-linked (GlcNAc...) asparagine glycosylation is present at N53. Cu cation-binding residues include H75 and H77. The N-linked (GlcNAc...) asparagine glycan is linked to N86. Cysteines 87 and 162 form a disulfide. H93 contacts Cu cation. An N-linked (GlcNAc...) asparagine glycan is attached at N98. H153 serves as a coordination point for Cu cation. 5 N-linked (GlcNAc...) asparagine glycosylation sites follow: N156, N164, N176, N181, and N192. Positions 176–201 are enriched in low complexity; sequence NTTMSNSSSSSSQSAVNTSSSMASTA. Residues 176–204 are disordered; it reads NTTMSNSSSSSSQSAVNTSSSMASTAPQG. A lipid anchor (GPI-anchor amidated asparagine) is attached at N205. Positions 206-228 are cleaved as a propeptide — removed in mature form; that stretch reads GAERAVVNGLLAAGVVGVIAALI.

Belongs to the Cu-Zn superoxide dismutase family. In terms of assembly, monomer. It depends on Cu cation as a cofactor. Post-translationally, the GPI-anchor is attached to the protein in the endoplasmic reticulum and serves to target the protein to the cell surface. There, the glucosamine-inositol phospholipid moiety is cleaved off and the GPI-modified mannoprotein is covalently attached via its lipidless GPI glycan remnant to the 1,6-beta-glucan of the outer cell wall layer.

It is found in the secreted. It localises to the cell wall. The protein localises to the membrane. It catalyses the reaction 2 superoxide + 2 H(+) = H2O2 + O2. Its activity is regulated as follows. Secreted in a disulfide-oxidized form and apo-pools of secreted SOD5 can readily capture extracellular copper for rapid induction of enzyme activity. In terms of biological role, superoxide dismutases serve to convert damaging superoxide radicals, a key form of ROS, to less damaging hydrogen peroxide that can be converted into water by catalase action. Degrades host-derived reactive oxygen species to escape innate immune surveillance. Involved in the occurrence of miconazole-tolerant persisters in biofilms. Persisters are cells that survive high doses of an antimicrobial agent. The unusual attributes of SOD5-like fungal proteins, including the absence of zinc and an open active site that readily captures extracellular copper, make these SODs well suited to meet challenges in zinc and copper availability at the host-pathogen interface. This Candida albicans (strain SC5314 / ATCC MYA-2876) (Yeast) protein is Cell surface Cu-only superoxide dismutase 5 (SOD5).